A 199-amino-acid polypeptide reads, in one-letter code: Lipid A acyltransferase PagP (199 aa).

Positions 1–25 (MNYKDIINACILSGVFLLHSPSALA) are cleaved as a signal peptide. Catalysis depends on residues histidine 74, aspartate 117, and serine 118.

The protein belongs to the lipid A palmitoyltransferase family. Homodimer.

The protein localises to the cell outer membrane. It catalyses the reaction a lipid A + a 1,2-diacyl-sn-glycero-3-phosphocholine = a hepta-acyl lipid A + a 2-acyl-sn-glycero-3-phosphocholine. The catalysed reaction is a lipid IVA + a 1,2-diacyl-sn-glycero-3-phosphocholine = a lipid IVB + a 2-acyl-sn-glycero-3-phosphocholine. It carries out the reaction a lipid IIA + a 1,2-diacyl-sn-glycero-3-phosphocholine = a lipid IIB + a 2-acyl-sn-glycero-3-phosphocholine. Transfers a fatty acid residue from the sn-1 position of a phospholipid to the N-linked hydroxyfatty acid chain on the proximal unit of lipid A or its precursors. The sequence is that of Lipid A acyltransferase PagP from Yersinia pestis bv. Antiqua (strain Antiqua).